The chain runs to 132 residues: S-protein homolog 19 (132 aa).

An N-terminal signal peptide occupies residues 1-26; that stretch reads MSGSLAFHIIMSVTFMVFFFGGLCEA. A glycan (N-linked (GlcNAc...) asparagine) is linked at N87.

The protein belongs to the plant self-incompatibility (S1) protein family.

It is found in the secreted. The polypeptide is S-protein homolog 19 (Arabidopsis thaliana (Mouse-ear cress)).